Here is a 452-residue protein sequence, read N- to C-terminus: Keratin, type I cytoskeletal 42 (452 aa).

The tract at residues 4–93 is head; sequence TTSVRQFSTS…GVSDALLGGS (90 aa). The coil 1A stretch occupies residues 94-129; it reads EKETMQNLNDRLATYLDRVRALEEANADLEVKIREW. Positions 94–405 constitute an IF rod domain; that stretch reads EKETMQNLND…RLLEGEDAHL (312 aa). Residues 130 to 147 form a linker 1 region; it reads YKKQGPGPARDYSPYFKT. Residues 148-239 form a coil 1B region; the sequence is IEDLRNKILA…KNHEEEMNAL (92 aa). Residues 240 to 262 are linker 12; sequence RGQVGGDVNVEMDAAPGVDLSRI. Residues 263–401 form a coil 2 region; it reads LNEMRDQYEK…ATYRRLLEGE (139 aa). Residues 402–452 are tail; the sequence is DAHLATQYSSSLASQPSREGMVTSRQVRTIVEEVQDGKVVSSREQVHRSTH.

This sequence belongs to the intermediate filament family. Heterodimer of a type I and a type II keratin. Colocalizes with KRT8/KRT18 filament network. Expressed in nail matrix and nail bed epithelium (at protein level). Also expressed in tongue and digits with weak expression in vibrissae and in both filiform and fungiform papillae of oral mucosa.

Its subcellular location is the cytoplasm. The chain is Keratin, type I cytoskeletal 42 from Mus musculus (Mouse).